The chain runs to 529 residues: DEP domain-containing protein 1B (529 aa).

Residues 24–108 (FRAGMPLRKH…DDGHLYRFPP (85 aa)) enclose the DEP domain. The 202-residue stretch at 192-393 (ARLQKVLGLD…FLMDNYQEIL (202 aa)) folds into the Rho-GAP domain.

This chain is DEP domain-containing protein 1B (DEPDC1B), found in Gallus gallus (Chicken).